Reading from the N-terminus, the 78-residue chain is uncharacterized protein (78 aa).

This is an uncharacterized protein from Treponema pallidum (strain Nichols).